Here is a 532-residue protein sequence, read N- to C-terminus: E3 ubiquitin-protein ligase rnf8-B (532 aa).

Residues 30–84 (VTMGRGLGVTYQLKPTLCPLMISRTHCLFKQNARDEWTVTDNKSLNGVWRNKERL) enclose the FHA domain. Positions 127 to 209 (SLIRPLPGKT…VETDTVSPTQ (83 aa)) are disordered. Positions 169–178 (VSRDGEDSAK) are enriched in basic and acidic residues. The RING-type zinc-finger motif lies at 377–415 (CIICSEHFIEAVTLNCAHSFCSYCIKSWRKRKEECPICR).

It belongs to the RNF8 family. As to quaternary structure, homodimer. Forms a E2-E3 ubiquitin ligase complex composed of the rnf8 homodimer and a E2 heterodimer of ube2n and ube2v2.

Its subcellular location is the nucleus. The enzyme catalyses S-ubiquitinyl-[E2 ubiquitin-conjugating enzyme]-L-cysteine + [acceptor protein]-L-lysine = [E2 ubiquitin-conjugating enzyme]-L-cysteine + N(6)-ubiquitinyl-[acceptor protein]-L-lysine.. Its pathway is protein modification; protein ubiquitination. Functionally, E3 ubiquitin-protein ligase that plays a key role in DNA damage signaling via 2 distinct roles: by mediating the 'Lys-63'-linked ubiquitination of histones H2A and H2AX and promoting the recruitment of DNA repair proteins at double-strand breaks (DSBs) sites, and by catalyzing 'Lys-48'-linked ubiquitination to remove target proteins from DNA damage sites. Following DNA DSBs, it is recruited to the sites of damage by ATM-phosphorylated mdc1 and catalyzes the 'Lys-63'-linked ubiquitination of histones H2A and H2AX, thereby promoting the formation of tp53bp1 and brca1 ionizing radiation-induced foci (IRIF). H2A ubiquitination also mediates the ATM-dependent transcriptional silencing at regions flanking DSBs in cis, a mechanism to avoid collision between transcription and repair intermediates. Also catalyzes the formation of 'Lys-48'-linked polyubiquitin chains, leading to degradation of substrate proteins. In addition to its function in damage signaling, also plays a role in higher-order chromatin structure by mediating extensive chromatin decondensation. The protein is E3 ubiquitin-protein ligase rnf8-B of Xenopus laevis (African clawed frog).